A 437-amino-acid polypeptide reads, in one-letter code: Ribosomal protein uS12 methylthiotransferase RimO (437 aa).

Residues 4 to 114 enclose the MTTase N-terminal domain; the sequence is PRISFVSLGC…VIEAVHTAIP (111 aa). [4Fe-4S] cluster contacts are provided by Cys13, Cys49, Cys78, Cys145, Cys149, and Cys152. The Radical SAM core domain maps to 131-369; it reads LTPRHYAYLK…MAKQQQISTH (239 aa). The TRAM domain occupies 372–437; that stretch reads KKKIGKRLQV…DAYDLYGIAV (66 aa).

The protein belongs to the methylthiotransferase family. RimO subfamily. It depends on [4Fe-4S] cluster as a cofactor.

The protein localises to the cytoplasm. It carries out the reaction L-aspartate(89)-[ribosomal protein uS12]-hydrogen + (sulfur carrier)-SH + AH2 + 2 S-adenosyl-L-methionine = 3-methylsulfanyl-L-aspartate(89)-[ribosomal protein uS12]-hydrogen + (sulfur carrier)-H + 5'-deoxyadenosine + L-methionine + A + S-adenosyl-L-homocysteine + 2 H(+). In terms of biological role, catalyzes the methylthiolation of an aspartic acid residue of ribosomal protein uS12. The sequence is that of Ribosomal protein uS12 methylthiotransferase RimO from Bartonella tribocorum (strain CIP 105476 / IBS 506).